The chain runs to 202 residues: FMN-dependent NADH:quinone oxidoreductase (202 aa).

FMN-binding positions include Ser9, Ser15–Ser17, and Met94–Leu97.

The protein belongs to the azoreductase type 1 family. Homodimer. The cofactor is FMN.

It catalyses the reaction 2 a quinone + NADH + H(+) = 2 a 1,4-benzosemiquinone + NAD(+). It carries out the reaction N,N-dimethyl-1,4-phenylenediamine + anthranilate + 2 NAD(+) = 2-(4-dimethylaminophenyl)diazenylbenzoate + 2 NADH + 2 H(+). In terms of biological role, quinone reductase that provides resistance to thiol-specific stress caused by electrophilic quinones. Also exhibits azoreductase activity. Catalyzes the reductive cleavage of the azo bond in aromatic azo compounds to the corresponding amines. The chain is FMN-dependent NADH:quinone oxidoreductase from Gluconobacter oxydans (strain 621H) (Gluconobacter suboxydans).